A 1031-amino-acid polypeptide reads, in one-letter code: Error-prone DNA polymerase (1031 aa).

The protein belongs to the DNA polymerase type-C family. DnaE2 subfamily.

It is found in the cytoplasm. It carries out the reaction DNA(n) + a 2'-deoxyribonucleoside 5'-triphosphate = DNA(n+1) + diphosphate. Its function is as follows. DNA polymerase involved in damage-induced mutagenesis and translesion synthesis (TLS). It is not the major replicative DNA polymerase. The chain is Error-prone DNA polymerase from Pseudomonas aeruginosa (strain ATCC 15692 / DSM 22644 / CIP 104116 / JCM 14847 / LMG 12228 / 1C / PRS 101 / PAO1).